Here is a 396-residue protein sequence, read N- to C-terminus: Tryptophan synthase beta chain (396 aa).

K86 is subject to N6-(pyridoxal phosphate)lysine.

Belongs to the TrpB family. As to quaternary structure, tetramer of two alpha and two beta chains. It depends on pyridoxal 5'-phosphate as a cofactor.

It carries out the reaction (1S,2R)-1-C-(indol-3-yl)glycerol 3-phosphate + L-serine = D-glyceraldehyde 3-phosphate + L-tryptophan + H2O. The protein operates within amino-acid biosynthesis; L-tryptophan biosynthesis; L-tryptophan from chorismate: step 5/5. Functionally, the beta subunit is responsible for the synthesis of L-tryptophan from indole and L-serine. In Erwinia tasmaniensis (strain DSM 17950 / CFBP 7177 / CIP 109463 / NCPPB 4357 / Et1/99), this protein is Tryptophan synthase beta chain.